The sequence spans 539 residues: Chaperonin GroEL 2 (539 aa).

ATP-binding positions include 30–33 (TLGP), Lys-51, 87–91 (DGTTT), Gly-415, 480–482 (NAA), and Asp-496.

Belongs to the chaperonin (HSP60) family. Forms a cylinder of 14 subunits composed of two heptameric rings stacked back-to-back. Interacts with the co-chaperonin GroES.

The protein resides in the cytoplasm. The enzyme catalyses ATP + H2O + a folded polypeptide = ADP + phosphate + an unfolded polypeptide.. Its function is as follows. Together with its co-chaperonin GroES, plays an essential role in assisting protein folding. The GroEL-GroES system forms a nano-cage that allows encapsulation of the non-native substrate proteins and provides a physical environment optimized to promote and accelerate protein folding. In Sphingopyxis alaskensis (strain DSM 13593 / LMG 18877 / RB2256) (Sphingomonas alaskensis), this protein is Chaperonin GroEL 2.